The following is a 450-amino-acid chain: FAD-linked oxidoreductase ptmO (450 aa).

The FAD-binding PCMH-type domain maps to 32–203 (PPELPYAIVR…TRFFIRTRPA (172 aa)).

The protein belongs to the oxygen-dependent FAD-linked oxidoreductase family. Requires FAD as cofactor.

The protein operates within secondary metabolite biosynthesis. Its function is as follows. FAD-linked oxidoreductase; part of the gene cluster that mediates the biosynthesis of the indole diterpenes penitrems. The geranylgeranyl diphosphate (GGPP) synthase ptmG catalyzes the first step in penitrem biosynthesis via conversion of farnesyl pyrophosphate and isopentyl pyrophosphate into geranylgeranyl pyrophosphate (GGPP). Condensation of indole-3-glycerol phosphate with GGPP by the prenyl transferase ptmC then forms 3-geranylgeranylindole (3-GGI). Epoxidation by the FAD-dependent monooxygenase ptmM leads to a epoxidized-GGI that is substrate of the terpene cyclase ptmB for cyclization to yield paspaline. Paspaline is subsequently converted to 13-desoxypaxilline by the cytochrome P450 monooxygenase ptmP, the latter being then converted to paxilline by the cytochrome P450 monooxygenase ptmQ. Paxilline is converted to beta-paxitriol via C-10 ketoreduction by the short-chain dehydrogenase ptmH which can be monoprenylated at the C-20 by the indole diterpene prenyltransferase ptmD. A two-step elimination (acetylation and elimination) process performed by the O-acetyltransferase ptmV and ptmI leads to the production of the prenylated form of penijanthine. The FAD-linked oxidoreductase ptmO then converts the prenylated form of penijanthine into PC-M5 which is in turn transformed into PC-M4 by the aromatic dimethylallyltransferase ptmE. Five sequential oxidative transformations performed by the cytochrome P450 monooxygenases ptmK, ptmU, ptmL, ptmN and ptmJ yield the various penitrem compounds. PtmK, ptmU and ptmM are involved in the formation of the key bicyclic ring of penitrem C via the formation of the intermediates secopenitrem D and penitrem D. PtmL catalyzes the epoxidation of penitrem D and C to yield penitrem B and F, respectively. PtmJ catalyzes the last benzylic hydroxylation to convert penitrem B to prenitrem E and penitrem F to penitrem A. This chain is FAD-linked oxidoreductase ptmO, found in Penicillium ochrochloron.